The chain runs to 284 residues: Type II methyltransferase M1.DpnII (284 aa).

7 residues coordinate S-adenosyl-L-methionine: Trp-17, Lys-21, Gly-46, Asp-62, Asp-177, Phe-178, and Asp-194.

This sequence belongs to the N(4)/N(6)-methyltransferase family. As to quaternary structure, monomer. Homodimer.

The catalysed reaction is a 2'-deoxyadenosine in DNA + S-adenosyl-L-methionine = an N(6)-methyl-2'-deoxyadenosine in DNA + S-adenosyl-L-homocysteine + H(+). In terms of biological role, an alpha subtype methylase that recognizes the double-stranded sequence 5'-GATC-3', methylates A-2 on both strands, and protects the DNA from cleavage by the DpnII endonuclease. The sequence is that of Type II methyltransferase M1.DpnII from Streptococcus pneumoniae.